We begin with the raw amino-acid sequence, 374 residues long: Chaperone protein DnaJ (374 aa).

The J domain maps to 5 to 70 (DYYEVLGVAK…QKRAAYDRYG (66 aa)). A CR-type zinc finger spans residues 134–212 (GFDTEIRVPS…CDGVGRIRRN (79 aa)). Positions 147, 150, 164, 167, 186, 189, 200, and 203 each coordinate Zn(2+). CXXCXGXG motif repeat units follow at residues 147-154 (CDTCHGSG), 164-171 (CRTCGGSG), 186-193 (CPTCHGTG), and 200-207 (CPSCDGVG).

The protein belongs to the DnaJ family. As to quaternary structure, homodimer. Zn(2+) is required as a cofactor.

The protein resides in the cytoplasm. Participates actively in the response to hyperosmotic and heat shock by preventing the aggregation of stress-denatured proteins and by disaggregating proteins, also in an autonomous, DnaK-independent fashion. Unfolded proteins bind initially to DnaJ; upon interaction with the DnaJ-bound protein, DnaK hydrolyzes its bound ATP, resulting in the formation of a stable complex. GrpE releases ADP from DnaK; ATP binding to DnaK triggers the release of the substrate protein, thus completing the reaction cycle. Several rounds of ATP-dependent interactions between DnaJ, DnaK and GrpE are required for fully efficient folding. Also involved, together with DnaK and GrpE, in the DNA replication of plasmids through activation of initiation proteins. The protein is Chaperone protein DnaJ of Bordetella petrii (strain ATCC BAA-461 / DSM 12804 / CCUG 43448).